Reading from the N-terminus, the 1027-residue chain is Protein translocase subunit SecA (1027 aa).

Residues Gln-143, 161–165, and Asp-661 each bind ATP; that span reads GEGKT. Positions 981–1027 are disordered; that stretch reads EESGTSNADNAGDNGPQTVIAEKKPGRNDLCPCGSGKKYKNCHGQQP. Zn(2+)-binding residues include Cys-1011, Cys-1013, Cys-1022, and His-1023.

It belongs to the SecA family. Monomer and homodimer. Part of the essential Sec protein translocation apparatus which comprises SecA, SecYEG and auxiliary proteins SecDF. Other proteins may also be involved. The cofactor is Zn(2+).

The protein localises to the cell inner membrane. It is found in the cytoplasm. The enzyme catalyses ATP + H2O + cellular proteinSide 1 = ADP + phosphate + cellular proteinSide 2.. Functionally, part of the Sec protein translocase complex. Interacts with the SecYEG preprotein conducting channel. Has a central role in coupling the hydrolysis of ATP to the transfer of proteins into and across the cell membrane, serving as an ATP-driven molecular motor driving the stepwise translocation of polypeptide chains across the membrane. This Chlorobium limicola (strain DSM 245 / NBRC 103803 / 6330) protein is Protein translocase subunit SecA.